A 199-amino-acid polypeptide reads, in one-letter code: Phosphoheptose isomerase (199 aa).

Residues 36–198 (MSQCLLNEHK…DRKLIPSSED (163 aa)) form the SIS domain. 51–53 (NGG) is a substrate binding site. Positions 60 and 64 each coordinate Zn(2+). Substrate is bound by residues glutamate 64, 93-94 (ND), 119-121 (STS), serine 124, and glutamine 174. The Zn(2+) site is built by glutamine 174 and histidine 182.

It belongs to the SIS family. GmhA subfamily. Homotetramer. Zn(2+) is required as a cofactor.

It is found in the cytoplasm. The catalysed reaction is 2 D-sedoheptulose 7-phosphate = D-glycero-alpha-D-manno-heptose 7-phosphate + D-glycero-beta-D-manno-heptose 7-phosphate. Its pathway is carbohydrate biosynthesis; D-glycero-D-manno-heptose 7-phosphate biosynthesis; D-glycero-alpha-D-manno-heptose 7-phosphate and D-glycero-beta-D-manno-heptose 7-phosphate from sedoheptulose 7-phosphate: step 1/1. Its function is as follows. Catalyzes the isomerization of sedoheptulose 7-phosphate in D-glycero-D-manno-heptose 7-phosphate. The sequence is that of Phosphoheptose isomerase from Coxiella burnetii (strain RSA 331 / Henzerling II).